The primary structure comprises 2879 residues: MTYDEGGHRNNEETPQDVNMSSNNEGMSTSSPTGSYGEIIGQATVSVPQEDQEKLTPLNELSGLYAERESYQSPLCPSTTKMISETVRKSSADDGYTSFPIRSTLIDRPVLDKTLRCEFALFPPFCDIQRLSTLSNASWALIAGHLTNSTKVIVGIPAFGESTSVHNIESGTALQPAPIPLLIDWRPEQSVMDYLKHVQSRIADVTTLGGAGSQLLTSGYPVNYNAGHLQTLIVVETNEISPGSINGTREVQLRQYDYKKKYACAALVIEIRLQKTGIVAVASFDTRALGPSLVYNLLKRLEYVMEQLFRVSSDHVLADIDMVTSEDLEQIWQWNDPIPAPVERCMHEMVQEQCRLQPNTLAVDAWDGRLTYRELDQLSNRLACHLVDRGVEPDMFVPLCFHKSMWMPVTAMGVLKAGGAFVLLEPSFPEQRLRAIVEETEASIVLASSTTMALSLRLLDNVIQVDSELFNCLTFSANRLPQLQPSSSAMFGVFTSGSTGKPKGAVLTHANYCSALTYQLDLLGFKKDSRVFDFASYAFDVSVHNIFASLASGACLCIPSEEKRLEDICKSISDMRATIVHLTPSVARLIQPEKVPLLQTVIFTGEPLSVEDVEQWWGKTNIVNEYGPAECSINTINSNPSSPEEATLIGKGVGVAVWIVDPSNHDLLVPIGSVGELLIEGALVGRGYINETEKNAAAFIENPKWLLHGRPGRPGRQGRLYKTGDLVKYGENGNLAFVGRKDTQVKIYGQRVDLREVEHWIQSCGQGAGQVVAEMIAPRADDHDPAPALVAFLRNEHTALDGSLCPNSTEAILRPVPDEVEARLSKHLPNYMVPKVFIVLSKFPMTATGKTDRMQLRKIGSSFSLEQLAEVRAKTWAGPKRQPLSDMERLLCDVWSKVLGLERRSIGPESNFFHLGGDSIAAMKSVGEARKSGIKVAVADVFRHPSLQDLSRQSKYIEDNSLDHIKPFELLGEEFNRLAFLKDASHQYGIDPSAIYDAYPCTPLQEGLMSLTAKRPGDYIEQMILELGEDVKIDNLWAAWKHVACVTPILRTRLVHHNDLGLMQLVIEEDTSWTDATGLDEYLDADRKRSMNLGEPLSRYGLVRDETGEPKWFVWSIHHAIYDGWSVQLILDAAYRAYSGQEVEQGPQFQEFIKYVQQQRHQNQKRVVEYWQKTLEGFEGAQFPPVVPSVQQPVANTAVRHCIPNPPNGRVGVTMSMLIRAAWALVVGRMANSDDVVYGSTLYGRNASVAGLDELAAPTIATVPLRIRLSSKKTVSEYLEAIQREATTMIPFEQTGLQEIAQMSDSCRMACKFQTLLVIQPEEHSQGKGPLGTWQVRSQEQWFSTYPLTLELWLGTDHITASAMFDSRIIESWVVRKMLQRLEGVMYQLNHATSSQLLGDITILTTEDLEQIWEWNKTIPTPVNRCVHEIIHDKVQHRPNAPAICAWDGEITYSELNRLADKLSGRLTELGVGPHLLVPLCFEKSLWTAVAILGVIKSGGGFVLLDASLPEQRLRSIMKQIKGDLVITCPSQQALCSRLGAETITLSWGFFSTLKDYEAGLQIQSYSPSSILYAVFTSGSTGIPKGVLITHANMASALYYQSEVMGLSEDSRLYDFASYSFDVAISNMFTVLAAGGCLCVPSEEHRKNNLEGSIISLRANALDLTPSIAQLLSPARLPNVRSLTLGGEPVLATAVEQWFGKLQIRNAYGPSECTPTCIVNHNPSSPEQATEIGNGVGIVTWVVDPSNHEVLLPPGCTGELLLEGPLVGPGYLDDGEKTAAAFVHDPVWLTKGTHNRSGRHGLLYKTGDLAKYHENGTLSFVRRKDTTQIKLRGQRVELGEVEHILRSHSCVIDAVAASQCDDKLGAWIAGFVTIRADGQKEHQGDEEYEQQQIQSWEDQFDGETYTSIEEIPREAIGRDFIGWTSMYDGSDLDKGEMNEWLNDTINTILDGGPAGHVLEIGCGSGMMLFNLANKGLQSYIGIEPSKRAVDATASIVKSIPHLKERVRIVKGTGEDLQQLGTPISPDLVVINSVIQYFPSQKYLVKLIQDILELRSVQTIFFGDVRSHALHKEFLALRALSIVGETASREEIGQVLSNLHRAEPELLLDPEFFTSLPARLPGHIAHVEILPKKMEATNELSSFRYGAVVHVDLKHGQIRDIDAKSWVSYTSQGLDCKSLLALLKDWPHAADTIAISDIPHSKTVFATKLIDELENGASEARHGRHWAEFIRQDAKQCCALSAIDLVKLAKEAGYRAEVSWARQYSQRGGLDAVFHRFITDNDARRVLFRFPIDHTNRPFHLLSSKPLRRRAEMNIQRELEARLRCQLPSHMIPQTITILDRMPISHNGKVDRQILADSVQRQWTGQERKRWPTTDTGKELQRIWSHVLNISPDSIGLDDGFVHFGGNSLHAMKIVHMARQAGINLKVTDMFRHSETTIGRLLLDCCCDDTPGKSTSADPVHWTYLMAAIDEKDKCLAAIQAGAKPRLVDGDIQADPDELFTVLLTGANGFIGTQILRQLLEHGRVDRVICIVRGESTSVARHRTIEAAQKALWWTEFHQEMLEVWPGDLSAPRLGLDDAKWRLLAEGKAVNIIIHNGASVNFVKGYAALEAVNVNSTVEMMSVVTRNPGMRFIYVSSARSQDPMEEEEEDMARVLTENPNGYNQTKFVAEALVRRAASRSSPRQHQFMVVSPGLVVGTPTEGVANADDWLWRMAAACIRVGVYNVDDSDKWIPLCDVGTIAAVIIHAALGHPSSSTTVTQVRGGLTMGEFWETLATAGYPLTGTRVAECTAAIREDILANREKHPLGVLEDMLQDLDDTTNVQWAASWRKNGLCSPARLKAALCKSAEFLSGVSFLPLPNFVRERLVQETSMSAFTRSGF.

Over residues 1–12 (MTYDEGGHRNNE) the composition is skewed to basic and acidic residues. The tract at residues 1 to 52 (MTYDEGGHRNNEETPQDVNMSSNNEGMSTSSPTGSYGEIIGQATVSVPQEDQ) is disordered. Positions 16-34 (QDVNMSSNNEGMSTSSPTG) are enriched in polar residues. The adenylation 1 stretch occupies residues 351-747 (QEQCRLQPNT…VGRKDTQVKI (397 aa)). One can recognise a Carrier 1 domain in the interval 882–958 (QPLSDMERLL…DLSRQSKYIE (77 aa)). At Ser919 the chain carries O-(pantetheine 4'-phosphoryl)serine. The condensation stretch occupies residues 997–1410 (DAYPCTPLQE…ITILTTEDLE (414 aa)). Positions 1433–1827 (DKVQHRPNAP…LSFVRRKDTT (395 aa)) are adenylation 2. Residues 1958-2050 (LEIGCGSGMM…KYLVKLIQDI (93 aa)) are methylation (Met) domain. The 79-residue stretch at 2370–2448 (WPTTDTGKEL…RLLLDCCCDD (79 aa)) folds into the Carrier 2 domain. Ser2407 carries the post-translational modification O-(pantetheine 4'-phosphoryl)serine. The interval 2500 to 2817 (TVLLTGANGF…LEDMLQDLDD (318 aa)) is thiesterase (TE) domain.

Belongs to the NRP synthetase family. Pantetheine 4'-phosphate serves as cofactor.

The enzyme catalyses (S)-1-pyrroline-5-carboxylate + L-arginine + S-adenosyl-L-methionine + 2 ATP = peramine + 2 AMP + S-adenosyl-L-homocysteine + 2 diphosphate + H2O + 2 H(+). It functions in the pathway secondary metabolite biosynthesis. In terms of biological role, nonribosomal peptide synthetase; part of the gene cluster that mediates the biosynthesis of pyrrolopyrazines, secondary metabolites showing insecticidal activity. The single multifunctional NRPS ppzA is responsible for the biosynthesis of peramine. The condensation domain of ppzA is proposed to catalyze formation of a peptide bond between 1-pyrroline-5-carboxylate and arginine. The methylation domain of ppzA would catalyze the N-methylation of the alpha-amino group of arginine. The reductase domain is proposed to be responsible for reduction of the thioester and the cyclization to form an iminium ion resulting in release from the peptide synthetase. Deprotonation of this intermediate and oxidation of the pyrroline ring would give rise to peramine. This final oxidation to give the pyrrole functionality may be spontaneous. In Epichloe species that produce only peramine, the peramine synthetase gene is not localized in a gene cluster, in contrast to Metarhizium species that contain additional pyrrolopyrazine biosynthesis genes. The 2-oxoglutarate-Fe(II) type oxidoreductase ppzC hydroxylates peramine to yield the newly identified compound 8-hydroxyperamine whereas ppzD converts L-proline into trans-4-hydroxy-L-proline, a precursor of peramine biosynthesis. This Metarhizium rileyi (strain RCEF 4871) (Nomuraea rileyi) protein is Peramine synthetase ppzA.